The primary structure comprises 461 residues: MGKEKIHINIVVIGHVDSGKSTTTGHLIYKCGGIDKRTIEKFEKEAQEMGKGSFKYAWVLDKLKAERERGITIDIALWKFETAKYYVTIIDAPGHRDFIKNMITGTSQADCAVLIVAAGIGEFEAGISKNGQTREHALLAFTLGVKQLIVGVNKMDMTDPPYSEARFEEIKKEVSSYIKKIGYNTASVAFVPISGWHGDNMLEPSPKTPWYKGWKVERKDGNADGKTLIEALDAILPPSRPTDKALRLPLQDVYKIGGIGTVPVGRVETGILKPGMLVTFAPAALTTEVKSVEMHHEALTEALPGDNVGFNVKNISVKELRRGYVAGDSKNQPPRGAADFTAQVIVLNHPGQISNGYTPVLDCHTAHIACKFAEIKEKCDRRTGKTTEENPKSIKSGDAAIVMLQPTKPMCVEAFQEFPPLGRFAVRDMRQTVAVGVIKSVTFKDTQGKVTKAAEKAQKKK.

One can recognise a tr-type G domain in the interval 5–242 (KIHINIVVIG…DAILPPSRPT (238 aa)). The tract at residues 14-21 (GHVDSGKS) is G1. 14–21 (GHVDSGKS) serves as a coordination point for GTP. The segment at 70-74 (GITID) is G2. A G3 region spans residues 91 to 94 (DAPG). GTP contacts are provided by residues 91 to 95 (DAPGH) and 153 to 156 (NKMD). The tract at residues 153–156 (NKMD) is G4. Residues 194–196 (SGW) are G5. Residues Glu301 and Glu374 each carry the 5-glutamyl glycerylphosphorylethanolamine modification.

Belongs to the TRAFAC class translation factor GTPase superfamily. Classic translation factor GTPase family. EF-Tu/EF-1A subfamily.

The protein localises to the cytoplasm. Functionally, this protein promotes the GTP-dependent binding of aminoacyl-tRNA to the A-site of ribosomes during protein biosynthesis. This Apis mellifera (Honeybee) protein is Elongation factor 1-alpha.